The chain runs to 180 residues: ATP-dependent protease subunit HslV (180 aa).

Thr5 is a catalytic residue. 3 residues coordinate Na(+): Gly165, Cys168, and Thr171.

The protein belongs to the peptidase T1B family. HslV subfamily. In terms of assembly, a double ring-shaped homohexamer of HslV is capped on each side by a ring-shaped HslU homohexamer. The assembly of the HslU/HslV complex is dependent on binding of ATP.

It is found in the cytoplasm. The catalysed reaction is ATP-dependent cleavage of peptide bonds with broad specificity.. Its activity is regulated as follows. Allosterically activated by HslU binding. Protease subunit of a proteasome-like degradation complex believed to be a general protein degrading machinery. The chain is ATP-dependent protease subunit HslV from Helicobacter pylori (strain ATCC 700392 / 26695) (Campylobacter pylori).